Here is an 866-residue protein sequence, read N- to C-terminus: Retinoblastoma-related protein 2 (866 aa).

The segment at 274–475 is domain A; the sequence is TPITSAMTTA…EKGSSLYNSL (202 aa). Positions 274–721 are pocket; that stretch reads TPITSAMTTA…NEVFVPAAKP (448 aa). Positions 476–593 are spacer; the sequence is IVARPSVASE…PVGGNEKCAD (118 aa). The interval 513–551 is disordered; the sequence is LPATPSKKRAAGRDDNADPRSPKRPCNESRSPVVEHNLQ. A compositionally biased stretch (basic and acidic residues) spans 523-539; that stretch reads AGRDDNADPRSPKRPCN. Positions 594–721 are domain B; sequence VTIQIFFSKI…NEVFVPAAKP (128 aa). Disordered regions lie at residues 731–754 and 839–866; these read TRPE…PFPN and SLGQ…KPDT. The segment covering 841–850 has biased composition (polar residues); sequence GQPNGGSTSL.

The protein belongs to the retinoblastoma protein (RB) family. Ubiquitous.

The protein localises to the nucleus. Its function is as follows. Regulator of biological processes that recruits a histone deacetylase to control gene transcription. May play a role in the entry into mitosis, negatively regulating the cell proliferation. Formation of stable complexes with geminiviridae replication-associated proteins may create a cellular environment which favors viral DNA replication. This Zea mays (Maize) protein is Retinoblastoma-related protein 2 (RBR2).